The chain runs to 344 residues: Exopolyphosphatase 1 (344 aa).

The segment at valine 319 to proline 344 is disordered.

This sequence belongs to the GppA/Ppx family. As to quaternary structure, homodimer.

It carries out the reaction [phosphate](n) + H2O = [phosphate](n-1) + phosphate + H(+). In terms of biological role, degradation of inorganic polyphosphates (polyP). Releases orthophosphate processively from the ends of the polyP chain. The sequence is that of Exopolyphosphatase 1 from Mycobacterium bovis (strain ATCC BAA-935 / AF2122/97).